The following is a 510-amino-acid chain: Glycerol kinase (510 aa).

ADP is bound at residue Thr13. 2 residues coordinate ATP: Thr13 and Thr14. Residue Thr13 participates in sn-glycerol 3-phosphate binding. Arg17 is a binding site for ADP. Sn-glycerol 3-phosphate contacts are provided by Arg83, Glu84, Tyr135, and Asp255. 5 residues coordinate glycerol: Arg83, Glu84, Tyr135, Asp255, and Gln256. Thr277, Gly321, Gly421, and Asn425 together coordinate ADP. Residues Thr277, Gly321, and Gly421 each contribute to the ATP site.

Belongs to the FGGY kinase family.

The catalysed reaction is glycerol + ATP = sn-glycerol 3-phosphate + ADP + H(+). The protein operates within polyol metabolism; glycerol degradation via glycerol kinase pathway; sn-glycerol 3-phosphate from glycerol: step 1/1. Functionally, key enzyme in the regulation of glycerol uptake and metabolism. Catalyzes the phosphorylation of glycerol to yield sn-glycerol 3-phosphate. This Halobacterium salinarum (strain ATCC 29341 / DSM 671 / R1) protein is Glycerol kinase.